Consider the following 261-residue polypeptide: ATP synthase subunit a (261 aa).

The next 5 helical transmembrane spans lie at 28–48, 89–109, 140–160, 203–223, and 229–249; these read AVHL…LTIF, IAPL…MDWV, NITF…SIKV, LFGN…IGVF, and FLWA…FMML.

It belongs to the ATPase A chain family. As to quaternary structure, F-type ATPases have 2 components, CF(1) - the catalytic core - and CF(0) - the membrane proton channel. CF(1) has five subunits: alpha(3), beta(3), gamma(1), delta(1), epsilon(1). CF(0) has three main subunits: a(1), b(2) and c(9-12). The alpha and beta chains form an alternating ring which encloses part of the gamma chain. CF(1) is attached to CF(0) by a central stalk formed by the gamma and epsilon chains, while a peripheral stalk is formed by the delta and b chains.

The protein localises to the cell inner membrane. Functionally, key component of the proton channel; it plays a direct role in the translocation of protons across the membrane. The polypeptide is ATP synthase subunit a (Colwellia psychrerythraea (strain 34H / ATCC BAA-681) (Vibrio psychroerythus)).